We begin with the raw amino-acid sequence, 430 residues long: Nacrein-like protein P2 (430 aa).

Residue N27 is glycosylated (N-linked (GlcNAc...) asparagine). The 397-residue stretch at 33–429 folds into the Alpha-carbonic anhydrase domain; that stretch reads AGFSYDRSIC…KNKVTVYKSF (397 aa). 3 residues coordinate Zn(2+): H132, H134, and H157. Residues 201 to 312 form a disordered region; it reads DEPDDEECKR…GENGHKHGCR (112 aa). Residues 207-219 show a composition bias toward basic and acidic residues; it reads ECKRILKGHHPDN. The span at 220–304 shows a compositional bias: low complexity; the sequence is NENGNGDNGN…NNGENGNNGE (85 aa). 27 tandem repeats follow at residues 225–227, 228–230, 231–233, 234–236, 237–239, 240–242, 243–245, 246–248, 249–251, 252–254, 255–257, 258–260, 261–263, 264–266, 267–269, 270–272, 273–275, 276–278, 279–281, 282–284, 285–287, 288–290, 291–293, 294–296, 297–299, 300–301, and 303–305. A 27 X 3 AA approximate tandem repeats of G-X-N region spans residues 225-305; that stretch reads GDNGNNGYNG…NGENGNNGEN (81 aa). Residue 370–371 participates in substrate binding; sequence TT.

It belongs to the alpha-carbonic anhydrase family. In terms of assembly, homooligomer; disulfide-linked. May also be disulfide-linked to insoluble organic matrix. The cofactor is Zn(2+). As to expression, expressed in the mantle.

The protein localises to the secreted. It localises to the extracellular space. The protein resides in the extracellular matrix. The catalysed reaction is hydrogencarbonate + H(+) = CO2 + H2O. Functionally, acts as a negative regulator for calcification in the shells of mollusks. May function both as a calcium concentrator and as a carbonic anhydrase required for production of carbonate ions, which are assembled to CaCO(3) at mineralization sites. Is important for shell formation in both the calcitic prismatic layer and the aragonitic nacreous layer. Shows inhibitory activity of crystal formation when present in free state but, when attached to the insoluble matrix, may regulate the form and size of aragonite crystal. The chain is Nacrein-like protein P2 from Mizuhopecten yessoensis (Japanese scallop).